A 251-amino-acid polypeptide reads, in one-letter code: Imidazole glycerol phosphate synthase subunit HisF (251 aa).

Catalysis depends on residues aspartate 11 and aspartate 130.

Belongs to the HisA/HisF family. As to quaternary structure, heterodimer of HisH and HisF.

The protein resides in the cytoplasm. The catalysed reaction is 5-[(5-phospho-1-deoxy-D-ribulos-1-ylimino)methylamino]-1-(5-phospho-beta-D-ribosyl)imidazole-4-carboxamide + L-glutamine = D-erythro-1-(imidazol-4-yl)glycerol 3-phosphate + 5-amino-1-(5-phospho-beta-D-ribosyl)imidazole-4-carboxamide + L-glutamate + H(+). Its pathway is amino-acid biosynthesis; L-histidine biosynthesis; L-histidine from 5-phospho-alpha-D-ribose 1-diphosphate: step 5/9. Its function is as follows. IGPS catalyzes the conversion of PRFAR and glutamine to IGP, AICAR and glutamate. The HisF subunit catalyzes the cyclization activity that produces IGP and AICAR from PRFAR using the ammonia provided by the HisH subunit. The sequence is that of Imidazole glycerol phosphate synthase subunit HisF from Natranaerobius thermophilus (strain ATCC BAA-1301 / DSM 18059 / JW/NM-WN-LF).